The chain runs to 258 residues: 3-deoxy-manno-octulosonate cytidylyltransferase (258 aa).

The protein belongs to the KdsB family.

It localises to the cytoplasm. It catalyses the reaction 3-deoxy-alpha-D-manno-oct-2-ulosonate + CTP = CMP-3-deoxy-beta-D-manno-octulosonate + diphosphate. It functions in the pathway nucleotide-sugar biosynthesis; CMP-3-deoxy-D-manno-octulosonate biosynthesis; CMP-3-deoxy-D-manno-octulosonate from 3-deoxy-D-manno-octulosonate and CTP: step 1/1. It participates in bacterial outer membrane biogenesis; lipopolysaccharide biosynthesis. Its function is as follows. Activates KDO (a required 8-carbon sugar) for incorporation into bacterial lipopolysaccharide in Gram-negative bacteria. The protein is 3-deoxy-manno-octulosonate cytidylyltransferase of Parvibaculum lavamentivorans (strain DS-1 / DSM 13023 / NCIMB 13966).